The chain runs to 158 residues: Cyclic pyranopterin monophosphate synthase (158 aa).

Residues 75 to 77 (LCH) and 113 to 114 (ME) contribute to the substrate site. Residue D128 is part of the active site.

It belongs to the MoaC family. In terms of assembly, homohexamer; trimer of dimers.

It catalyses the reaction (8S)-3',8-cyclo-7,8-dihydroguanosine 5'-triphosphate = cyclic pyranopterin phosphate + diphosphate. It functions in the pathway cofactor biosynthesis; molybdopterin biosynthesis. Functionally, catalyzes the conversion of (8S)-3',8-cyclo-7,8-dihydroguanosine 5'-triphosphate to cyclic pyranopterin monophosphate (cPMP). This Histophilus somni (strain 2336) (Haemophilus somnus) protein is Cyclic pyranopterin monophosphate synthase.